An 851-amino-acid polypeptide reads, in one-letter code: Transcriptional regulator RFX1 (851 aa).

Polar residues-rich tracts occupy residues 1–11 and 20–34; these read MSSDQTPQNRN and PRLQ…STGP. 3 disordered regions span residues 1-121, 134-170, and 195-230; these read MSSD…EPHP, QSQF…PQTY, and HEAS…TGEN. Residues 38 to 53 show a composition bias toward basic and acidic residues; sequence QQRERSQEQESDHEHQ. Residues 54 to 84 show a composition bias toward low complexity; it reads QAQQHLHQFQQSNLTPSTTAFPSSTSIPTFS. Over residues 85 to 114 the composition is skewed to polar residues; sequence KQDQGYHNQFSSPQSSYRKIGNFAQSSNAP. Low complexity predominate over residues 141-170; it reads YSSPYIGQSQSQSQSQSQAQPQPHPQPQTY. A compositionally biased stretch (polar residues) spans 199-211; the sequence is SADNDSATNITTP. The segment at residues 282 to 357 is a DNA-binding region (RFX-type winged-helix); the sequence is GMVWLLNSCD…YHYCGIKLTG (76 aa). 2 disordered regions span residues 368–411 and 783–806; these read YQQK…SVSY and PPSL…TGTQ. Polar residues predominate over residues 384–393; sequence AQVGSSTSSA. The segment covering 783–797 has biased composition (low complexity); it reads PPSLSSLPQTQQQNP.

This sequence belongs to the RFX family.

It localises to the nucleus. Functionally, transcription factor involved in DNA damage responses, morphogenesis, and virulence. The sequence is that of Transcriptional regulator RFX1 (RFX1) from Candida albicans (strain SC5314 / ATCC MYA-2876) (Yeast).